A 378-amino-acid chain; its full sequence is Succinyl-diaminopimelate desuccinylase (378 aa).

His-67 contributes to the Zn(2+) binding site. Asp-69 is a catalytic residue. Asp-100 contacts Zn(2+). Glu-134 functions as the Proton acceptor in the catalytic mechanism. Residues Glu-135, Glu-163, and His-349 each contribute to the Zn(2+) site.

The protein belongs to the peptidase M20A family. DapE subfamily. Homodimer. Requires Zn(2+) as cofactor. It depends on Co(2+) as a cofactor.

The enzyme catalyses N-succinyl-(2S,6S)-2,6-diaminopimelate + H2O = (2S,6S)-2,6-diaminopimelate + succinate. Its pathway is amino-acid biosynthesis; L-lysine biosynthesis via DAP pathway; LL-2,6-diaminopimelate from (S)-tetrahydrodipicolinate (succinylase route): step 3/3. Its function is as follows. Catalyzes the hydrolysis of N-succinyl-L,L-diaminopimelic acid (SDAP), forming succinate and LL-2,6-diaminopimelate (DAP), an intermediate involved in the bacterial biosynthesis of lysine and meso-diaminopimelic acid, an essential component of bacterial cell walls. The polypeptide is Succinyl-diaminopimelate desuccinylase (Nitrosospira multiformis (strain ATCC 25196 / NCIMB 11849 / C 71)).